Consider the following 305-residue polypeptide: MSRLNVELPGLDLKNPVMPASGCFAFGAEFSQFYDLSELGAIMIKAATKEARYGNETPRVAETDSGMINAIGLQNPGVHHIIEHELKKLEQFDVPIIANVAGSVEEDYVYVAEHISKAPNVKALELNISCPNVKEGGMQFGVDPQVAAELTRKVKAVSEVPVYVKLSPNVTNIVEMAKAIAEYADGLTMINTLVGLRIDGKSGKPIIANTIGGLSGPAIKPVALRMVYEVRKAIDIPIIAMGGVQNAQDVIDYISVGANAVAVGTANFQNPMVCKEIIDELPTLLDKLGVDHINELYGRTHEVMK.

FMN-binding positions include Ser-21 and 45–46; that span reads KA. Substrate contacts are provided by residues Lys-45 and 69-73; that span reads NAIGL. FMN is bound by residues Asn-99 and Asn-127. Residue Asn-127 coordinates substrate. Catalysis depends on Cys-130, which acts as the Nucleophile. 2 residues coordinate FMN: Lys-165 and Ile-190. A substrate-binding site is contributed by 191 to 192; it reads NT. Residues Gly-216, 242-243, and 264-265 contribute to the FMN site; these read GG and GT.

This sequence belongs to the dihydroorotate dehydrogenase family. Type 1 subfamily. Heterotetramer of 2 PyrK and 2 PyrD type B subunits. It depends on FMN as a cofactor.

It is found in the cytoplasm. It carries out the reaction (S)-dihydroorotate + NAD(+) = orotate + NADH + H(+). It functions in the pathway pyrimidine metabolism; UMP biosynthesis via de novo pathway; orotate from (S)-dihydroorotate (NAD(+) route): step 1/1. Its function is as follows. Catalyzes the conversion of dihydroorotate to orotate with NAD(+) as electron acceptor. The protein is Dihydroorotate dehydrogenase B (NAD(+)), catalytic subunit (pyrD) of Staphylococcus carnosus (strain TM300).